The sequence spans 160 residues: Sulfur-rich protein (160 aa).

The next 2 membrane-spanning stretches (helical) occupy residues 62-82 (ITMV…TFVL) and 91-111 (FLFL…SVFM).

Its subcellular location is the membrane. This chain is Sulfur-rich protein (srp), found in Chlamydia caviae (strain ATCC VR-813 / DSM 19441 / 03DC25 / GPIC) (Chlamydophila caviae).